Consider the following 551-residue polypeptide: Dihydroxy-acid dehydratase (551 aa).

Asp-78 is a Mg(2+) binding site. Cys-119 is a [2Fe-2S] cluster binding site. Mg(2+) contacts are provided by Asp-120 and Lys-121. N6-carboxylysine is present on Lys-121. Cys-191 provides a ligand contact to [2Fe-2S] cluster. Glu-441 is a binding site for Mg(2+). Catalysis depends on Ser-467, which acts as the Proton acceptor.

The protein belongs to the IlvD/Edd family. Homodimer. The cofactor is [2Fe-2S] cluster. It depends on Mg(2+) as a cofactor.

The enzyme catalyses (2R)-2,3-dihydroxy-3-methylbutanoate = 3-methyl-2-oxobutanoate + H2O. The catalysed reaction is (2R,3R)-2,3-dihydroxy-3-methylpentanoate = (S)-3-methyl-2-oxopentanoate + H2O. It functions in the pathway amino-acid biosynthesis; L-isoleucine biosynthesis; L-isoleucine from 2-oxobutanoate: step 3/4. It participates in amino-acid biosynthesis; L-valine biosynthesis; L-valine from pyruvate: step 3/4. Functionally, functions in the biosynthesis of branched-chain amino acids. Catalyzes the dehydration of (2R,3R)-2,3-dihydroxy-3-methylpentanoate (2,3-dihydroxy-3-methylvalerate) into 2-oxo-3-methylpentanoate (2-oxo-3-methylvalerate) and of (2R)-2,3-dihydroxy-3-methylbutanoate (2,3-dihydroxyisovalerate) into 2-oxo-3-methylbutanoate (2-oxoisovalerate), the penultimate precursor to L-isoleucine and L-valine, respectively. The sequence is that of Dihydroxy-acid dehydratase from Pyrococcus furiosus (strain ATCC 43587 / DSM 3638 / JCM 8422 / Vc1).